Reading from the N-terminus, the 196-residue chain is Pyridoxine/pyridoxamine 5'-phosphate oxidase (196 aa).

Position 49 (lysine 49) interacts with substrate. FMN is bound by residues lysine 66 and glutamine 88. Positions 106, 110, and 114 each coordinate substrate. FMN-binding positions include 123–124 and tryptophan 168; that span reads QS. Residue 174–176 coordinates substrate; that stretch reads RLH. Arginine 178 contributes to the FMN binding site.

The protein belongs to the pyridoxamine 5'-phosphate oxidase family. Homodimer. FMN serves as cofactor.

It catalyses the reaction pyridoxamine 5'-phosphate + O2 + H2O = pyridoxal 5'-phosphate + H2O2 + NH4(+). The enzyme catalyses pyridoxine 5'-phosphate + O2 = pyridoxal 5'-phosphate + H2O2. It participates in cofactor metabolism; pyridoxal 5'-phosphate salvage; pyridoxal 5'-phosphate from pyridoxamine 5'-phosphate: step 1/1. The protein operates within cofactor metabolism; pyridoxal 5'-phosphate salvage; pyridoxal 5'-phosphate from pyridoxine 5'-phosphate: step 1/1. Catalyzes the oxidation of either pyridoxine 5'-phosphate (PNP) or pyridoxamine 5'-phosphate (PMP) into pyridoxal 5'-phosphate (PLP). This Bdellovibrio bacteriovorus (strain ATCC 15356 / DSM 50701 / NCIMB 9529 / HD100) protein is Pyridoxine/pyridoxamine 5'-phosphate oxidase.